The chain runs to 148 residues: Endoribonuclease YbeY (148 aa).

Residues His113, His117, and His123 each contribute to the Zn(2+) site.

It belongs to the endoribonuclease YbeY family. It depends on Zn(2+) as a cofactor.

It is found in the cytoplasm. Single strand-specific metallo-endoribonuclease involved in late-stage 70S ribosome quality control and in maturation of the 3' terminus of the 16S rRNA. This is Endoribonuclease YbeY from Borrelia turicatae (strain 91E135).